The chain runs to 201 residues: Recombination protein RecR (201 aa).

The segment at 57 to 72 (CTHCRTFTEEESCAIC) adopts a C4-type zinc-finger fold. One can recognise a Toprim domain in the interval 81–176 (GFLCVVEQPS…KVSRIAHGIP (96 aa)).

It belongs to the RecR family.

Functionally, may play a role in DNA repair. It seems to be involved in an RecBC-independent recombinational process of DNA repair. It may act with RecF and RecO. The polypeptide is Recombination protein RecR (Histophilus somni (strain 129Pt) (Haemophilus somnus)).